Consider the following 38-residue polypeptide: Photosystem I reaction center subunit IX (38 aa).

A helical membrane pass occupies residues 6 to 26 (YLSTAPVVATLWLFLTAGILI).

The protein belongs to the PsaJ family.

The protein resides in the plastid. Its subcellular location is the chloroplast thylakoid membrane. In terms of biological role, may help in the organization of the PsaE and PsaF subunits. The sequence is that of Photosystem I reaction center subunit IX from Cyanidioschyzon merolae (strain NIES-3377 / 10D) (Unicellular red alga).